We begin with the raw amino-acid sequence, 254 residues long: Ribonuclease HII (254 aa).

The RNase H type-2 domain occupies 70-254 (QAIAGIDEVG…TFEPIKSMYE (185 aa)). A divalent metal cation-binding residues include D76, E77, and D168.

This sequence belongs to the RNase HII family. It depends on Mn(2+) as a cofactor. Mg(2+) is required as a cofactor.

Its subcellular location is the cytoplasm. It carries out the reaction Endonucleolytic cleavage to 5'-phosphomonoester.. In terms of biological role, endonuclease that specifically degrades the RNA of RNA-DNA hybrids. This Streptococcus sanguinis (strain SK36) protein is Ribonuclease HII.